The following is a 70-amino-acid chain: Gas vesicle protein A (70 aa).

The protein belongs to the gas vesicle GvpA family. The gas vesicle shell is 2 nm thick and consists of a single layer of this protein. It forms helical ribs nearly perpendicular to the long axis of the vesicle.

Its subcellular location is the gas vesicle shell. In terms of biological role, gas vesicles are hollow, gas filled proteinaceous nanostructures found in some microorganisms. During planktonic growth they allow positioning of the organism at a favorable depth for light or nutrient acquisition. GvpA forms the protein shell. The polypeptide is Gas vesicle protein A (Bradyrhizobium sp. (strain ORS 278)).